Reading from the N-terminus, the 391-residue chain is Na(+)/H(+) antiporter NhaA (391 aa).

11 helical membrane passes run 14 to 34 (GGII…LGAT), 59 to 79 (MLLW…GLEV), 95 to 115 (AFPV…YLAF), 125 to 145 (GWAI…ALLG), 154 to 174 (IFLM…IALF), 180 to 200 (SILS…LNIF), 219 to 239 (VLKS…FIPL), 254 to 274 (VLHP…NAGV), 292 to 312 (IIAG…WLAL), 328 to 348 (IMAV…ISTL), and 357 to 377 (LIVW…FVGY).

The protein belongs to the NhaA Na(+)/H(+) (TC 2.A.33) antiporter family.

Its subcellular location is the cell inner membrane. It catalyses the reaction Na(+)(in) + 2 H(+)(out) = Na(+)(out) + 2 H(+)(in). Functionally, na(+)/H(+) antiporter that extrudes sodium in exchange for external protons. This chain is Na(+)/H(+) antiporter NhaA, found in Enterobacter sp. (strain 638).